Here is a 447-residue protein sequence, read N- to C-terminus: GTPase Der (447 aa).

EngA-type G domains follow at residues 4 to 165 (QIIT…PEEE) and 180 to 357 (LQIV…KIWN). GTP contacts are provided by residues 10–17 (GRPNVGKS), 57–61 (DTPGL), 119–122 (NKCE), 186–193 (GRPNAGKS), 233–237 (DTAGL), and 298–301 (NKWD). Residues 358-443 (KKITTSKLNE…PIRFIYVKTK (86 aa)) form the KH-like domain.

This sequence belongs to the TRAFAC class TrmE-Era-EngA-EngB-Septin-like GTPase superfamily. EngA (Der) GTPase family. In terms of assembly, associates with the 50S ribosomal subunit.

In terms of biological role, GTPase that plays an essential role in the late steps of ribosome biogenesis. The chain is GTPase Der from Rickettsia peacockii (strain Rustic).